The chain runs to 277 residues: Shikimate dehydrogenase (NADP(+)) (277 aa).

Residues 15–17 (SLS) and threonine 62 contribute to the shikimate site. Lysine 66 functions as the Proton acceptor in the catalytic mechanism. The shikimate site is built by asparagine 87 and aspartate 102. Residues 127-131 (GAGGA), 151-156 (NRTVDK), and isoleucine 219 each bind NADP(+). A shikimate-binding site is contributed by tyrosine 221. Residue glycine 242 participates in NADP(+) binding.

The protein belongs to the shikimate dehydrogenase family. As to quaternary structure, homodimer.

It carries out the reaction shikimate + NADP(+) = 3-dehydroshikimate + NADPH + H(+). It participates in metabolic intermediate biosynthesis; chorismate biosynthesis; chorismate from D-erythrose 4-phosphate and phosphoenolpyruvate: step 4/7. Involved in the biosynthesis of the chorismate, which leads to the biosynthesis of aromatic amino acids. Catalyzes the reversible NADPH linked reduction of 3-dehydroshikimate (DHSA) to yield shikimate (SA). This is Shikimate dehydrogenase (NADP(+)) from Bacillus cereus (strain AH820).